We begin with the raw amino-acid sequence, 513 residues long: ATP synthase subunit alpha (513 aa).

169-176 (GDRQTGKT) contributes to the ATP binding site.

The protein belongs to the ATPase alpha/beta chains family. As to quaternary structure, F-type ATPases have 2 components, CF(1) - the catalytic core - and CF(0) - the membrane proton channel. CF(1) has five subunits: alpha(3), beta(3), gamma(1), delta(1), epsilon(1). CF(0) has three main subunits: a(1), b(2) and c(9-12). The alpha and beta chains form an alternating ring which encloses part of the gamma chain. CF(1) is attached to CF(0) by a central stalk formed by the gamma and epsilon chains, while a peripheral stalk is formed by the delta and b chains.

It localises to the cell inner membrane. The catalysed reaction is ATP + H2O + 4 H(+)(in) = ADP + phosphate + 5 H(+)(out). Its function is as follows. Produces ATP from ADP in the presence of a proton gradient across the membrane. The alpha chain is a regulatory subunit. This chain is ATP synthase subunit alpha, found in Shewanella putrefaciens (strain CN-32 / ATCC BAA-453).